A 358-amino-acid polypeptide reads, in one-letter code: Phosphoribosylformylglycinamidine cyclo-ligase (358 aa).

The protein belongs to the AIR synthase family.

It localises to the cytoplasm. It catalyses the reaction 2-formamido-N(1)-(5-O-phospho-beta-D-ribosyl)acetamidine + ATP = 5-amino-1-(5-phospho-beta-D-ribosyl)imidazole + ADP + phosphate + H(+). Its pathway is purine metabolism; IMP biosynthesis via de novo pathway; 5-amino-1-(5-phospho-D-ribosyl)imidazole from N(2)-formyl-N(1)-(5-phospho-D-ribosyl)glycinamide: step 2/2. This chain is Phosphoribosylformylglycinamidine cyclo-ligase, found in Chromohalobacter salexigens (strain ATCC BAA-138 / DSM 3043 / CIP 106854 / NCIMB 13768 / 1H11).